We begin with the raw amino-acid sequence, 265 residues long: uncharacterized protein (265 aa).

Belongs to the MG067/MG068/MG395 family.

This is an uncharacterized protein from Mycoplasma pneumoniae (strain ATCC 29342 / M129 / Subtype 1) (Mycoplasmoides pneumoniae).